The primary structure comprises 587 residues: Probable phosphoribomutase (587 aa).

Substrate-binding positions include Thr-49, Arg-53, and Ser-149–His-150. Residue Ser-149 is the Phosphoserine intermediate of the active site. Residues Ser-149, Asp-306, Asp-308, and Asp-310 each contribute to the Mg(2+) site. A Phosphoserine modification is found at Ser-149. Substrate-binding positions include Asp-310–Arg-311, Thr-380, Glu-404–Ala-406, and Lys-418.

The protein belongs to the phosphohexose mutase family. The cofactor is Mg(2+).

It localises to the cytoplasm. The protein localises to the nucleus. The enzyme catalyses alpha-D-ribose 1-phosphate = D-ribose 5-phosphate. In terms of biological role, converts ribose 1-phosphate to ribose 5-phosphate. Involved in ribose salvage via the pentose phosphate pathway. The sequence is that of Probable phosphoribomutase from Schizosaccharomyces pombe (strain 972 / ATCC 24843) (Fission yeast).